We begin with the raw amino-acid sequence, 367 residues long: uncharacterized protein (367 aa).

It belongs to the Gfo/Idh/MocA family.

This is an uncharacterized protein from Streptococcus pneumoniae serotype 4 (strain ATCC BAA-334 / TIGR4).